The primary structure comprises 85 residues: MFVSLKLPTKAALSKLFLQCKALRGFFLKEANYNFQHSWLYFIFVLNQLAYMRGNFSVIALRELKWEVKRAFDRYRYFFKKHVYT.

It is found in the mitochondrion. This is an uncharacterized protein from Paramecium tetraurelia.